The chain runs to 768 residues: U-box domain-containing protein 45 (768 aa).

The region spanning 278 to 352 (VPPEELRCPI…SSWCEQNGVQ (75 aa)) is the U-box domain. ARM repeat units follow at residues 454-497 (EEAR…NLAV), 500-540 (NRNK…CLEE), 542-579 (KPVIGSSLAVPFMVNLLWTETEVQCKVDALHSLFHLST), 581-620 (PPNIPCLLSADLVNALQSLTISDEQRWTEKSLAVLLNLVL), and 623-662 (AGKDEMVSAPSLVSNLCTILDTGEPNEQEQAVSLLLILCN).

As to quaternary structure, binds to SD129.

It catalyses the reaction S-ubiquitinyl-[E2 ubiquitin-conjugating enzyme]-L-cysteine + [acceptor protein]-L-lysine = [E2 ubiquitin-conjugating enzyme]-L-cysteine + N(6)-ubiquitinyl-[acceptor protein]-L-lysine.. It participates in protein modification; protein ubiquitination. Functionally, functions as an E3 ubiquitin ligase. The polypeptide is U-box domain-containing protein 45 (PUB45) (Arabidopsis thaliana (Mouse-ear cress)).